The chain runs to 506 residues: F-box protein At4g02760 (506 aa).

In terms of domain architecture, F-box spans 115–161 (TSWPLLPELTIKVFSMLDTKSLMQASACCTMFNKCAMDRVCYSHIDL). The segment at 452-506 (TFVAEFRSPSPSESDVRSPSPSSSSDSSSSSDSSSSSSSGESSDESGTEEEEDED) is disordered. Low complexity predominate over residues 459 to 492 (SPSPSESDVRSPSPSSSSDSSSSSDSSSSSSSGE). Positions 493–506 (SSDESGTEEEEDED) are enriched in acidic residues.

The protein is F-box protein At4g02760 of Arabidopsis thaliana (Mouse-ear cress).